Reading from the N-terminus, the 1373-residue chain is DNA-directed RNA polymerase subunit beta'' (1373 aa).

Zn(2+)-binding residues include cysteine 220, cysteine 291, cysteine 298, and cysteine 301.

This sequence belongs to the RNA polymerase beta' chain family. RpoC2 subfamily. In plastids the minimal PEP RNA polymerase catalytic core is composed of four subunits: alpha, beta, beta', and beta''. When a (nuclear-encoded) sigma factor is associated with the core the holoenzyme is formed, which can initiate transcription. It depends on Zn(2+) as a cofactor.

The protein resides in the plastid. Its subcellular location is the chloroplast. The enzyme catalyses RNA(n) + a ribonucleoside 5'-triphosphate = RNA(n+1) + diphosphate. DNA-dependent RNA polymerase catalyzes the transcription of DNA into RNA using the four ribonucleoside triphosphates as substrates. This Silene latifolia (White campion) protein is DNA-directed RNA polymerase subunit beta''.